Here is a 591-residue protein sequence, read N- to C-terminus: Protein CBFA2T3 (591 aa).

The disordered stretch occupies residues 1–105 (MPGGTPRLEG…SSSASLSTHQ (105 aa)). The interval 1–381 (MPGGTPRLEG…ADREELNHWI (381 aa)) is mediates localization to the nucleus. The segment covering 41 to 52 (STPPNMPPPPPA) has biased composition (pro residues). Positions 55-105 (QGATRHPSFTPSTMMNGSSHSPTAINGAPSTPNGFSNGPATSSSASLSTHQ) are enriched in polar residues. One can recognise a TAFH domain in the interval 112 to 207 (ARQLSKLKRF…SPAQYLAQHE (96 aa)). 2 disordered regions span residues 226–291 (LEVS…PPQH) and 386–420 (DAEDMKKGSPPSARPHNSSSSSEAPQLDVHRDFAP). The segment covering 230–256 (ESGKRRTPDRTKENGLDRDPLHPEHLS) has biased composition (basic and acidic residues). Over residues 263–274 (SPAQRYSPSNGL) the composition is skewed to polar residues. Residues 279–290 (NGLPHPPGPPPQ) are compositionally biased toward pro residues. Low complexity predominate over residues 394–410 (SPPSARPHNSSSSSEAP). Positions 433 to 488 (RKAEEAVNEVKRQAMSELQKAVSDAERKAHELITTERAKMERALAEAKRQASEDAL) form a coiled coil. Residues Cys501, Cys504, Cys512, Cys515, Cys521, Cys525, His533, and Cys537 each coordinate Zn(2+). The MYND-type zinc-finger motif lies at 501–537 (CWNCGRKASETCSGCNTARYCGSFCQHKDWEKHHHVC). The interval 548-591 (SVPTAVGQPEAVPPMASSPSDAGSAGASRAGTPGTPAPLESASR) is disordered. Residues 560 to 585 (PPMASSPSDAGSAGASRAGTPGTPAP) show a composition bias toward low complexity.

The protein belongs to the CBFA2T family.

Its subcellular location is the nucleus. It is found in the nucleolus. The protein resides in the nucleoplasm. It localises to the golgi apparatus. Functionally, functions as a transcriptional repressor. Regulates the proliferation and the differentiation of erythroid progenitors. Plays a role in granulocyte differentiation. May also function as an A-kinase-anchoring protein. In Gallus gallus (Chicken), this protein is Protein CBFA2T3 (CBFA2T3).